The chain runs to 326 residues: Triacylglycerol lipase 2 (326 aa).

Positions 142–146 (AHSMG) match the (A/G)XSXG lipase motif motif.

In terms of assembly, interacts with MIA40; forms mixed disulfide intermediates with MIA40.

The protein localises to the mitochondrion. Its subcellular location is the mitochondrion intermembrane space. It catalyses the reaction a triacylglycerol + H2O = a diacylglycerol + a fatty acid + H(+). It carries out the reaction 1,2,3-tri-(9Z-octadecenoyl)-glycerol + H2O = di-(9Z)-octadecenoylglycerol + (9Z)-octadecenoate + H(+). The enzyme catalyses 1,2,3-tributanoylglycerol + H2O = dibutanoylglycerol + butanoate + H(+). The catalysed reaction is 1,2,3-trioctanoylglycerol + H2O = dioctanoylglycerol + octanoate + H(+). It catalyses the reaction di-(9Z)-octadecenoylglycerol + H2O = (9Z-octadecenoyl)-glycerol + (9Z)-octadecenoate + H(+). It carries out the reaction dioctanoylglycerol + H2O = octanoylglycerol + octanoate + H(+). Functionally, mitochondrial triacylglycerol (TAG) lipase with activity toward long-chain diacylglycerols (DAGs) and triacylglycerols (TAGs). Involved in mitochondrial lipid metabolism. The sequence is that of Triacylglycerol lipase 2 (TGL2) from Saccharomyces cerevisiae (strain ATCC 204508 / S288c) (Baker's yeast).